Reading from the N-terminus, the 185-residue chain is Coordinator of PRMT5 and differentiation stimulator (185 aa).

Position 1 is an N-acetylmethionine (Met1). The disordered stretch occupies residues 1 to 109; the sequence is MDPPTAGAQS…MSGCLPKEQA (109 aa). Basic and acidic residues-rich tracts occupy residues 42–52 and 66–77; these read SSQEKATENAT and SPAHGEGTHCEE. Phosphoserine is present on Ser66. A compositionally biased stretch (acidic residues) spans 78 to 89; the sequence is EGFAEDDEDSDG.

Interacts with PRMT5. Interacts with histone H4; specifically interacts with the N-terminus of histone H4 but not with histone H3. Interacts with CBFB. Found in a complex with PRMT5, RUNX1 and CBFB.

It localises to the nucleus. In terms of biological role, histone-binding protein required for histone H4 methyltransferase activity of PRMT5. Specifically required for histone H4 'Arg-3' methylation mediated by PRMT5, but not histone H3 'Arg-8' methylation, suggesting that it modulates the substrate specificity of PRMT5. Specifically interacts with the N-terminus of histone H4 but not with histone H3, suggesting that it acts by promoting the association between histone H4 and PRMT5. Involved in CCNE1 promoter repression. Plays a role in muscle cell differentiation by modulating the recruitment of PRMT5 to the promoter of genes involved in the coordination between cell cycle exit and muscle differentiation. This is Coordinator of PRMT5 and differentiation stimulator (COPRS) from Bos taurus (Bovine).